Here is a 154-residue protein sequence, read N- to C-terminus: Small ribosomal subunit protein bS6 (154 aa).

The segment at 107 to 154 (KSDDRERGFRGPKPPGRFESGRKRGYDDREEFRARAGGDDDDRGLDQE) is disordered. The segment covering 125-154 (ESGRKRGYDDREEFRARAGGDDDDRGLDQE) has biased composition (basic and acidic residues).

This sequence belongs to the bacterial ribosomal protein bS6 family.

Functionally, binds together with bS18 to 16S ribosomal RNA. The sequence is that of Small ribosomal subunit protein bS6 from Granulibacter bethesdensis (strain ATCC BAA-1260 / CGDNIH1).